The chain runs to 346 residues: Zinc finger CCCH domain-containing protein 28 (346 aa).

The tract at residues 1–99 (MASAETPNPD…SPRYPDGKRR (99 aa)) is disordered. Positions 17-41 (DAAAAADPAAAAPAAAATDPAAAGS) are enriched in low complexity. The segment covering 62–86 (RSSRSRSRSPRRGRSRSRSRSRSRG) has biased composition (basic residues). C3H1-type zinc fingers lie at residues 103–131 (DLNV…HPHP), 138–165 (DSKV…HPPP), 181–209 (KVKM…HHSP), 211–237 (EDCA…HVMA), 282–308 (NYGV…HPDL), and 314–340 (NTQV…HPPA).

This chain is Zinc finger CCCH domain-containing protein 28, found in Oryza sativa subsp. japonica (Rice).